Here is a 400-residue protein sequence, read N- to C-terminus: Chorismate synthase (400 aa).

NADP(+)-binding residues include Arg-40 and Arg-46. FMN-binding positions include 135–137 (RAS), 257–258 (QA), Gly-301, 316–320 (KPIST), and Arg-342.

Belongs to the chorismate synthase family. Homotetramer. It depends on FMNH2 as a cofactor.

The enzyme catalyses 5-O-(1-carboxyvinyl)-3-phosphoshikimate = chorismate + phosphate. It participates in metabolic intermediate biosynthesis; chorismate biosynthesis; chorismate from D-erythrose 4-phosphate and phosphoenolpyruvate: step 7/7. Functionally, catalyzes the anti-1,4-elimination of the C-3 phosphate and the C-6 proR hydrogen from 5-enolpyruvylshikimate-3-phosphate (EPSP) to yield chorismate, which is the branch point compound that serves as the starting substrate for the three terminal pathways of aromatic amino acid biosynthesis. This reaction introduces a second double bond into the aromatic ring system. This chain is Chorismate synthase, found in Tropheryma whipplei (strain TW08/27) (Whipple's bacillus).